We begin with the raw amino-acid sequence, 154 residues long: Protein X (154 aa).

A mitochondrial targeting sequence region spans residues 68-117 (PCALRFTSARRMETTVNANQVLPKVLHKRTLGLSALSTTDLEAYFKDCVF).

This sequence belongs to the orthohepadnavirus protein X family. In terms of assembly, may form homodimer. May interact with host CEBPA, CFLAR, CREB1, DDB1, E4F1, HBXIP, HSPD1/HSP60, NFKBIA, POLR2E and SMAD4. Interacts with host SMC5-SMC6 complex and induces its degradation. Interacts with host TRPC4AP; leading to prevent ubiquitination of TRPC4AP. Interacts with host PLSCR1; this interaction promotes ubiquitination and degradation of HBx and impairs HBx-mediated cell proliferation. In terms of processing, a fraction may be phosphorylated in insect cells and HepG2 cells, a human hepatoblastoma cell line. Phosphorylated in vitro by host protein kinase C or mitogen-activated protein kinase. N-acetylated in insect cells.

It localises to the host cytoplasm. It is found in the host nucleus. The protein localises to the host mitochondrion. Multifunctional protein that plays a role in silencing host antiviral defenses and promoting viral transcription. Does not seem to be essential for HBV infection. May be directly involved in development of cirrhosis and liver cancer (hepatocellular carcinoma). Most of cytosolic activities involve modulation of cytosolic calcium. The effect on apoptosis is controversial depending on the cell types in which the studies have been conducted. May induce apoptosis by localizing in mitochondria and causing loss of mitochondrial membrane potential. May also modulate apoptosis by binding host CFLAR, a key regulator of the death-inducing signaling complex (DISC). Promotes viral transcription by using the host E3 ubiquitin ligase DDB1 to target the SMC5-SMC6 complex to proteasomal degradation. This host complex would otherwise bind to viral episomal DNA, and prevents its transcription. Moderately stimulates transcription of many different viral and cellular transcription elements. Promoters and enhancers stimulated by HBx contain DNA binding sites for NF-kappa-B, AP-1, AP-2, c-EBP, ATF/CREB, or the calcium-activated factor NF-AT. The sequence is that of Protein X from Homo sapiens (Human).